A 116-amino-acid chain; its full sequence is Tyrosine-protein phosphatase 14 (116 aa).

The Tyrosine-protein phosphatase domain occupies 1-116 (WRMITQEKAQ…SLKNPGPVIV (116 aa)). Substrate is bound at residue D84.

Belongs to the protein-tyrosine phosphatase family.

It carries out the reaction O-phospho-L-tyrosyl-[protein] + H2O = L-tyrosyl-[protein] + phosphate. The polypeptide is Tyrosine-protein phosphatase 14 (STY-14) (Styela plicata (Wrinkled sea squirt)).